A 378-amino-acid chain; its full sequence is tRNA (guanine(26)-N(2))-dimethyltransferase (378 aa).

Positions 4 to 374 (KEVTEGKVRI…KEYEEITKCI (371 aa)) constitute a Trm1 methyltransferase domain. Positions 44, 69, 87, 114, and 115 each coordinate S-adenosyl-L-methionine. Residues cysteine 246, cysteine 249, cysteine 263, and cysteine 266 each contribute to the Zn(2+) site.

It belongs to the class I-like SAM-binding methyltransferase superfamily. Trm1 family.

The enzyme catalyses guanosine(26) in tRNA + 2 S-adenosyl-L-methionine = N(2)-dimethylguanosine(26) in tRNA + 2 S-adenosyl-L-homocysteine + 2 H(+). Its function is as follows. Dimethylates a single guanine residue at position 26 of a number of tRNAs using S-adenosyl-L-methionine as donor of the methyl groups. This chain is tRNA (guanine(26)-N(2))-dimethyltransferase, found in Saccharolobus solfataricus (strain ATCC 35092 / DSM 1617 / JCM 11322 / P2) (Sulfolobus solfataricus).